Consider the following 873-residue polypeptide: DNA mismatch repair protein MutS (873 aa).

The tract at residues 1–34 (MAAIPTPRLHRGVTHLSRQTKSRARHPMSTPQHT) is disordered. The span at 8-26 (RLHRGVTHLSRQTKSRARH) shows a compositional bias: basic residues. Position 635-642 (635-642 (GPNMGGKS)) interacts with ATP.

It belongs to the DNA mismatch repair MutS family.

In terms of biological role, this protein is involved in the repair of mismatches in DNA. It is possible that it carries out the mismatch recognition step. This protein has a weak ATPase activity. The chain is DNA mismatch repair protein MutS from Chromobacterium violaceum (strain ATCC 12472 / DSM 30191 / JCM 1249 / CCUG 213 / NBRC 12614 / NCIMB 9131 / NCTC 9757 / MK).